A 458-amino-acid polypeptide reads, in one-letter code: MADTKPLHQTRFEAAVSVIQSLPKNGSFQPSNEMMLKFYSFYKQATLGPCNTPRPGFWDPVGRYKWDAWNSLGDMSKEDAMIAYVDEMKKILETMPVTEKVEELLQVIGPFYEIVEDKKHGRGSGVTSELGSVLTSTPNGKAVNGKAESSDSGAESDEEQAATKEVREEDEEEESEHSEQEDKDVEQQPGHEKPAESIVNGLTRNHRELVTEEPTPLPSKCLSEPGDKVAIPDTHSPVNDPEADREEDCTEDIAAMQHLTSDSDSEIFCDSMEQFGQDEADHSLLLQDAMLNGDITETSAGGELKDGGEDGKQSGHGAQRKTWSEKSEHFGSRRERPSRMQPGGDGSRSGQIGSGGDGDRWGSDRGPNGSLNEQIAVVLMRLQEDMQNVLQRLHSLEVQTASQAQFLLRESNNQPMEKKPSRWPFGISPGTLALAVVWPFVVHWLMHVFLQKRRRKQT.

In terms of domain architecture, ACB spans 8–97 (HQTRFEAAVS…MKKILETMPV (90 aa)). An acyl-CoA is bound by residues 19–28 (IQSLPKNGSF), 39–43 (YSFYK), Lys-65, and Tyr-84. Disordered stretches follow at residues 119 to 248 (KHGR…REED) and 296 to 369 (TETS…GPNG). Positions 125-139 (GVTSELGSVLTSTPN) are enriched in polar residues. Residues 154-188 (AESDEEQAATKEVREEDEEEESEHSEQEDKDVEQQ) are a coiled coil. 3 stretches are compositionally biased toward basic and acidic residues: residues 177 to 195 (HSEQ…EKPA), 303 to 313 (ELKDGGEDGKQ), and 322 to 338 (TWSE…ERPS). A compositionally biased stretch (gly residues) spans 343-356 (GGDGSRSGQIGSGG). The stretch at 373–402 (EQIAVVLMRLQEDMQNVLQRLHSLEVQTAS) forms a coiled coil. A helical transmembrane segment spans residues 430 to 450 (GTLALAVVWPFVVHWLMHVFL).

The protein belongs to the ATG37 family.

Its subcellular location is the peroxisome membrane. Its function is as follows. Acyl-CoA binding protein which acts as the peroxisome receptor for pexophagy but is dispensable for aggrephagy and nonselective autophagy. Binds medium- and long-chain acyl-CoA esters. This Xenopus tropicalis (Western clawed frog) protein is Acyl-CoA-binding domain-containing protein 5 (acbd5).